The sequence spans 360 residues: DNA replication and repair protein RecF (360 aa).

30 to 37 is a binding site for ATP; it reads GQNGSGKT.

This sequence belongs to the RecF family.

It localises to the cytoplasm. The RecF protein is involved in DNA metabolism; it is required for DNA replication and normal SOS inducibility. RecF binds preferentially to single-stranded, linear DNA. It also seems to bind ATP. The chain is DNA replication and repair protein RecF from Shewanella putrefaciens (strain CN-32 / ATCC BAA-453).